The primary structure comprises 201 residues: Imidazoleglycerol-phosphate dehydratase (201 aa).

It belongs to the imidazoleglycerol-phosphate dehydratase family.

The protein localises to the cytoplasm. It carries out the reaction D-erythro-1-(imidazol-4-yl)glycerol 3-phosphate = 3-(imidazol-4-yl)-2-oxopropyl phosphate + H2O. It participates in amino-acid biosynthesis; L-histidine biosynthesis; L-histidine from 5-phospho-alpha-D-ribose 1-diphosphate: step 6/9. This chain is Imidazoleglycerol-phosphate dehydratase, found in Methanopyrus kandleri (strain AV19 / DSM 6324 / JCM 9639 / NBRC 100938).